The following is a 145-amino-acid chain: 3-hydroxyacyl-[acyl-carrier-protein] dehydratase FabZ (145 aa).

Residue His48 is part of the active site.

The protein belongs to the thioester dehydratase family. FabZ subfamily.

It localises to the cytoplasm. It carries out the reaction a (3R)-hydroxyacyl-[ACP] = a (2E)-enoyl-[ACP] + H2O. Functionally, involved in unsaturated fatty acids biosynthesis. Catalyzes the dehydration of short chain beta-hydroxyacyl-ACPs and long chain saturated and unsaturated beta-hydroxyacyl-ACPs. This Marinomonas sp. (strain MWYL1) protein is 3-hydroxyacyl-[acyl-carrier-protein] dehydratase FabZ.